A 126-amino-acid chain; its full sequence is Large ribosomal subunit protein bL12 (126 aa).

It belongs to the bacterial ribosomal protein bL12 family. Homodimer. Part of the ribosomal stalk of the 50S ribosomal subunit. Forms a multimeric L10(L12)X complex, where L10 forms an elongated spine to which 2 to 4 L12 dimers bind in a sequential fashion. Binds GTP-bound translation factors.

In terms of biological role, forms part of the ribosomal stalk which helps the ribosome interact with GTP-bound translation factors. Is thus essential for accurate translation. This chain is Large ribosomal subunit protein bL12, found in Solibacter usitatus (strain Ellin6076).